We begin with the raw amino-acid sequence, 57 residues long: DNA-directed RNA polymerase subunit Rpo6 (57 aa).

The protein belongs to the archaeal Rpo6/eukaryotic RPB6 RNA polymerase subunit family. Part of the RNA polymerase complex.

The protein localises to the cytoplasm. It carries out the reaction RNA(n) + a ribonucleoside 5'-triphosphate = RNA(n+1) + diphosphate. Its function is as follows. DNA-dependent RNA polymerase (RNAP) catalyzes the transcription of DNA into RNA using the four ribonucleoside triphosphates as substrates. The polypeptide is DNA-directed RNA polymerase subunit Rpo6 (Haloarcula marismortui (strain ATCC 43049 / DSM 3752 / JCM 8966 / VKM B-1809) (Halobacterium marismortui)).